A 116-amino-acid chain; its full sequence is Putative pterin-4-alpha-carbinolamine dehydratase (116 aa).

Belongs to the pterin-4-alpha-carbinolamine dehydratase family.

The enzyme catalyses (4aS,6R)-4a-hydroxy-L-erythro-5,6,7,8-tetrahydrobiopterin = (6R)-L-erythro-6,7-dihydrobiopterin + H2O. This is Putative pterin-4-alpha-carbinolamine dehydratase from Xylella fastidiosa (strain 9a5c).